Here is a 27-residue protein sequence, read N- to C-terminus: Ferric reductase B (27 aa).

In terms of assembly, homodimer. Requires FAD as cofactor.

It carries out the reaction 2 a Fe(II)-siderophore + NAD(+) + H(+) = 2 a Fe(III)-siderophore + NADH. Reductase activity that acts on Fe(3+)-chelates and uses both NADH and NADPH as electron donors. May play a role in iron uptake. This is Ferric reductase B (ferB) from Paracoccus denitrificans.